Reading from the N-terminus, the 232-residue chain is Fibrillarin-like rRNA/tRNA 2'-O-methyltransferase (232 aa).

S-adenosyl-L-methionine contacts are provided by residues 89-90 (TT), 108-109 (EF), 133-134 (DA), and 153-156 (DIAQ).

Belongs to the methyltransferase superfamily. Fibrillarin family. As to quaternary structure, interacts with nop5. Component of box C/D small ribonucleoprotein (sRNP) particles that contain rpl7ae, FlpA and nop5, plus a guide RNA. These sRNP particles form homodimers, giving rise to an asymmetric holoenzyme.

In terms of biological role, involved in pre-rRNA and tRNA processing. Utilizes the methyl donor S-adenosyl-L-methionine to catalyze the site-specific 2'-hydroxyl methylation of ribose moieties in rRNA and tRNA. Site specificity is provided by a guide RNA that base pairs with the substrate. Methylation occurs at a characteristic distance from the sequence involved in base pairing with the guide RNA. This is Fibrillarin-like rRNA/tRNA 2'-O-methyltransferase from Saccharolobus solfataricus (strain ATCC 35092 / DSM 1617 / JCM 11322 / P2) (Sulfolobus solfataricus).